Here is a 449-residue protein sequence, read N- to C-terminus: UNC93-like protein MFSD11 (449 aa).

A helical membrane pass occupies residues 8–28 (LFNIIILGVAFMFMFTAFQTC). An N-linked (GlcNAc...) asparagine glycan is attached at Asn-40. The next 5 helical transmembrane spans lie at 53–73 (AIIY…VAIV), 74–94 (GPQL…AVFI), 96–116 (PFPW…AVLW), 138–158 (IFWA…YFAW), and 170–190 (RTVF…FFLI). Ser-204 carries the phosphoserine modification. The next 6 helical transmembrane spans lie at 239 to 259 (MLLL…FSGV), 277 to 297 (LIGL…SLFG), 309 to 329 (PVVL…FLNM), 359 to 379 (FLLG…LGFL), 385 to 405 (APAF…AFFY), and 410 to 430 (LLHW…ISFF).

This sequence belongs to the unc-93 family.

It localises to the membrane. This is UNC93-like protein MFSD11 (MFSD11) from Homo sapiens (Human).